The sequence spans 405 residues: DNA primase DnaG (405 aa).

The 77-residue stretch at 172–248 (DSIIVVEGRA…HIDYIARAPP (77 aa)) folds into the Toprim domain. Mg(2+)-binding residues include Glu-178, Asp-222, and Asp-224. Residues 279–302 (AAGEKTESQMSPQQPQLTQTQPTT) form a disordered region. The segment covering 290-302 (PQQPQLTQTQPTT) has biased composition (low complexity).

Belongs to the archaeal DnaG primase family. In terms of assembly, forms a ternary complex with MCM helicase and DNA. Component of the archaeal exosome complex. It depends on Mg(2+) as a cofactor.

It carries out the reaction ssDNA + n NTP = ssDNA/pppN(pN)n-1 hybrid + (n-1) diphosphate.. Functionally, RNA polymerase that catalyzes the synthesis of short RNA molecules used as primers for DNA polymerase during DNA replication. Also part of the exosome, which is a complex involved in RNA degradation. Acts as a poly(A)-binding protein that enhances the interaction between heteromeric, adenine-rich transcripts and the exosome. This Pyrobaculum islandicum (strain DSM 4184 / JCM 9189 / GEO3) protein is DNA primase DnaG.